The sequence spans 330 residues: MVEIYYDDDASLDVLAGRKVAVIGYGSQGHAHALNLRDSGVDVRVGLPADSRSRAKAAEEGLRVLTPAEASAEADIIMLLTPDTTHRKIYADSIAPHLSEGKALAFGHGFNIRYGLIEPPAGVDVFMVAPKGPGHLVRRVFEEGKGVPVLVAVENDASGNALAVALAYAKGIGGTRAGALRTTFTEETETDLFGEQAVLCGGASALVQAGFETLVEAGYTPEVAYFECLHELKLIVDLMYEGGISQMRYSISDTAEYGDVTRGPRVVTPAVKAEMRKILDEIRDGTFAREWVAEDDNGRPNFTKLVEEGKQHPIEQVGAKLRPLMSWIAK.

The region spanning 2–182 (VEIYYDDDAS…GGTRAGALRT (181 aa)) is the KARI N-terminal Rossmann domain. NADP(+)-binding positions include 25–28 (YGSQ), S51, and S53. H108 is an active-site residue. An NADP(+)-binding site is contributed by G134. Residues 183–328 (TFTEETETDL…AKLRPLMSWI (146 aa)) form the KARI C-terminal knotted domain. Mg(2+) contacts are provided by D191, E195, E227, and E231. S252 lines the substrate pocket.

The protein belongs to the ketol-acid reductoisomerase family. Requires Mg(2+) as cofactor.

It catalyses the reaction (2R)-2,3-dihydroxy-3-methylbutanoate + NADP(+) = (2S)-2-acetolactate + NADPH + H(+). It carries out the reaction (2R,3R)-2,3-dihydroxy-3-methylpentanoate + NADP(+) = (S)-2-ethyl-2-hydroxy-3-oxobutanoate + NADPH + H(+). It functions in the pathway amino-acid biosynthesis; L-isoleucine biosynthesis; L-isoleucine from 2-oxobutanoate: step 2/4. The protein operates within amino-acid biosynthesis; L-valine biosynthesis; L-valine from pyruvate: step 2/4. In terms of biological role, involved in the biosynthesis of branched-chain amino acids (BCAA). Catalyzes an alkyl-migration followed by a ketol-acid reduction of (S)-2-acetolactate (S2AL) to yield (R)-2,3-dihydroxy-isovalerate. In the isomerase reaction, S2AL is rearranged via a Mg-dependent methyl migration to produce 3-hydroxy-3-methyl-2-ketobutyrate (HMKB). In the reductase reaction, this 2-ketoacid undergoes a metal-dependent reduction by NADPH to yield (R)-2,3-dihydroxy-isovalerate. This is Ketol-acid reductoisomerase (NADP(+)) from Frankia alni (strain DSM 45986 / CECT 9034 / ACN14a).